Reading from the N-terminus, the 329-residue chain is Aspartate--ammonia ligase (329 aa).

This sequence belongs to the class-II aminoacyl-tRNA synthetase family. AsnA subfamily.

The protein resides in the cytoplasm. It catalyses the reaction L-aspartate + NH4(+) + ATP = L-asparagine + AMP + diphosphate + H(+). The protein operates within amino-acid biosynthesis; L-asparagine biosynthesis; L-asparagine from L-aspartate (ammonia route): step 1/1. The protein is Aspartate--ammonia ligase of Ureaplasma parvum serovar 3 (strain ATCC 27815 / 27 / NCTC 11736).